The sequence spans 764 residues: 5-methyltetrahydropteroyltriglutamate--homocysteine methyltransferase (764 aa).

5-methyltetrahydropteroyltri-L-glutamate is bound by residues 16–19 (RELK) and Lys121. L-homocysteine-binding positions include 440–442 (IGS) and Glu493. L-methionine is bound by residues 440–442 (IGS) and Glu493. 5-methyltetrahydropteroyltri-L-glutamate contacts are provided by residues 524-525 (RC) and Trp570. Residue Asp608 coordinates L-homocysteine. Asp608 lines the L-methionine pocket. Glu614 provides a ligand contact to 5-methyltetrahydropteroyltri-L-glutamate. Positions 650, 652, and 674 each coordinate Zn(2+). Catalysis depends on His703, which acts as the Proton donor. Cys735 contributes to the Zn(2+) binding site.

This sequence belongs to the vitamin-B12 independent methionine synthase family. The cofactor is Zn(2+).

The catalysed reaction is 5-methyltetrahydropteroyltri-L-glutamate + L-homocysteine = tetrahydropteroyltri-L-glutamate + L-methionine. It participates in amino-acid biosynthesis; L-methionine biosynthesis via de novo pathway; L-methionine from L-homocysteine (MetE route): step 1/1. In terms of biological role, catalyzes the transfer of a methyl group from 5-methyltetrahydrofolate to homocysteine resulting in methionine formation. This Burkholderia lata (strain ATCC 17760 / DSM 23089 / LMG 22485 / NCIMB 9086 / R18194 / 383) protein is 5-methyltetrahydropteroyltriglutamate--homocysteine methyltransferase.